Consider the following 524-residue polypeptide: 2-isopropylmalate synthase (524 aa).

The 263-residue stretch at 12–274 folds into the Pyruvate carboxyltransferase domain; it reads VIIFDTTLRD…WNRIETTMLT (263 aa). Residues aspartate 21, histidine 209, histidine 211, and asparagine 245 each contribute to the Mn(2+) site. Positions 398-524 are regulatory domain; sequence KLMSLTVIAG…EDAPAVAVAG (127 aa).

Belongs to the alpha-IPM synthase/homocitrate synthase family. LeuA type 1 subfamily. As to quaternary structure, homodimer. Mn(2+) serves as cofactor.

It localises to the cytoplasm. It catalyses the reaction 3-methyl-2-oxobutanoate + acetyl-CoA + H2O = (2S)-2-isopropylmalate + CoA + H(+). It functions in the pathway amino-acid biosynthesis; L-leucine biosynthesis; L-leucine from 3-methyl-2-oxobutanoate: step 1/4. Functionally, catalyzes the condensation of the acetyl group of acetyl-CoA with 3-methyl-2-oxobutanoate (2-ketoisovalerate) to form 3-carboxy-3-hydroxy-4-methylpentanoate (2-isopropylmalate). This is 2-isopropylmalate synthase from Rhodopseudomonas palustris (strain ATCC BAA-98 / CGA009).